Consider the following 352-residue polypeptide: Heat-inducible transcription repressor HrcA (352 aa).

The protein belongs to the HrcA family.

In terms of biological role, negative regulator of class I heat shock genes (grpE-dnaK-dnaJ and groELS operons). Prevents heat-shock induction of these operons. This chain is Heat-inducible transcription repressor HrcA, found in Chlorobium phaeobacteroides (strain BS1).